The following is a 395-amino-acid chain: S-adenosylmethionine synthase (395 aa).

Position 14 (histidine 14) interacts with ATP. Aspartate 16 provides a ligand contact to Mg(2+). Glutamate 42 serves as a coordination point for K(+). L-methionine is bound by residues glutamate 55 and glutamine 98. The flexible loop stretch occupies residues glutamine 98 to lysine 108. Residues aspartate 174 to lysine 176, arginine 240 to phenylalanine 241, aspartate 249, arginine 255 to lysine 256, alanine 272, and lysine 276 each bind ATP. Aspartate 249 provides a ligand contact to L-methionine. Lysine 280 serves as a coordination point for L-methionine.

Belongs to the AdoMet synthase family. In terms of assembly, homotetramer; dimer of dimers. Mg(2+) is required as a cofactor. Requires K(+) as cofactor.

The protein resides in the cytoplasm. It carries out the reaction L-methionine + ATP + H2O = S-adenosyl-L-methionine + phosphate + diphosphate. It participates in amino-acid biosynthesis; S-adenosyl-L-methionine biosynthesis; S-adenosyl-L-methionine from L-methionine: step 1/1. Catalyzes the formation of S-adenosylmethionine (AdoMet) from methionine and ATP. The overall synthetic reaction is composed of two sequential steps, AdoMet formation and the subsequent tripolyphosphate hydrolysis which occurs prior to release of AdoMet from the enzyme. This chain is S-adenosylmethionine synthase, found in Caldanaerobacter subterraneus subsp. tengcongensis (strain DSM 15242 / JCM 11007 / NBRC 100824 / MB4) (Thermoanaerobacter tengcongensis).